A 237-amino-acid polypeptide reads, in one-letter code: Ribonuclease 3 (237 aa).

The RNase III domain maps to 6–133; the sequence is LIEVEKLIGI…VIAAVYLDKG (128 aa). Glutamate 46 lines the Mg(2+) pocket. Aspartate 50 is an active-site residue. The Mg(2+) site is built by aspartate 119 and glutamate 122. The active site involves glutamate 122. One can recognise a DRBM domain in the interval 160–229; it reads DFKTRLQEVL…AKAALQRLGE (70 aa).

Belongs to the ribonuclease III family. Homodimer. Mg(2+) serves as cofactor.

The protein localises to the cytoplasm. The enzyme catalyses Endonucleolytic cleavage to 5'-phosphomonoester.. Its function is as follows. Digests double-stranded RNA. Involved in the processing of primary rRNA transcript to yield the immediate precursors to the large and small rRNAs (23S and 16S). Processes some mRNAs, and tRNAs when they are encoded in the rRNA operon. Processes pre-crRNA and tracrRNA of type II CRISPR loci if present in the organism. This is Ribonuclease 3 from Clostridium perfringens (strain 13 / Type A).